Reading from the N-terminus, the 1019-residue chain is MNSELSQDLGASAARQEHLRDVVEHAGHLLPAQGPIGVFVHHNTLHAFQHLPFHDALAAASAIFEAEPYLSEADYRAHIASGRIGDEDLEAALAGRFAAQPDERRGPLSRREIERLALRHPIEAETAAGLLWRISEAGETRRLRADVPDERRRRMVQSTERWLEARPEIAARLLDRAGRDPEARAALALWDACRAVPLPPAPPLEPPLVERVGEGRSHRDLLVELAGEDPAELIDPLMIRFLGAYLDEGIAHWTMPDRAKGLWRCFRDMALEGSRLAAPAFVGLDAELRRFDAEALSPPAIAVRALEELSVAEDHWDVYVTRVLLELPGWAGMIHRLEHTPSDRPPGSPPVSLVEYLAARLTLARYALRDVARRRLGYRGPLAGLVEHARRAARPPAPPSSSPDHARPFRLFQLAQLAGLSAAEIEPLSKAERVWALEALEAFDEITRRRVLHEAYEHHHRTEVLHGIAANLRRPEEERSVEAPRFQVAFCIDDRCEGLRRHFEELSPRHETFGVAGFFGVPIRYRGLDDAGHVSLCPVGVEPAHEIVERPHEEEAGWRRKARRKRWARFLHALGRGTRTLARGVLLTPTLGLLSTVPLVGRTLFPRAAARLRRALERRLLPPVPTRLHSPRDEGSAAGGEGQPFTAAAKAARVAATLENMGLTRGFAPIVVVLGHGATSVNNPHQSAYDCGACGGRHGGPNARLFAAMANDSEVRVLLAARGIDIPDGTFFLGGMNNTTTDEIVLYDQHLVPSSHRGELSALIGALDAARQQHAHERCRRFASAPREGDAARALAHVEARAADLSEARPELGHVTNAVCVVGRRSLTRGLFLDRRAFLVSYDPIQDQGGAILERVLLAVGPVGAGINLEYYFSCVDNRRYGAGTKLPHNLASLLGVMEGSLSDLRTGLPKQMIEIHEPVRLLVVVEASTDTAAALYARQPALRELIGNGWIQLACVDPATRRIACFTGDGFAPFSPPDQPLPAVQRSADWYAGRSGFVPPALIRAASTRPREVVDHAV.

Zn(2+)-binding residues include Cys-491 and Asp-493. The disordered stretch occupies residues 624-643 (VPTRLHSPRDEGSAAGGEGQ). The Zn(2+) site is built by His-676 and Cys-691.

Belongs to the inorganic carbon transporter (TC 9.A.2) DabA family. As to quaternary structure, forms a complex with DabB. Zn(2+) serves as cofactor.

The protein resides in the cell inner membrane. Functionally, part of an energy-coupled inorganic carbon pump. This is Probable inorganic carbon transporter subunit DabA 1 from Sorangium cellulosum (strain So ce56) (Polyangium cellulosum (strain So ce56)).